Consider the following 263-residue polypeptide: Protein M1425_2021 (263 aa).

This sequence belongs to the CinA family.

The protein is Protein M1425_2021 of Saccharolobus islandicus (strain M.14.25 / Kamchatka #1) (Sulfolobus islandicus).